Here is a 245-residue protein sequence, read N- to C-terminus: CTD nuclear envelope phosphatase 1B (245 aa).

The helical transmembrane segment at 7–29 threads the bilayer; that stretch reads CLLGVRTFHGVTSRIWSFFLYIL. The FCP1 homology domain maps to 58–225; that stretch reads NNVKRKILVL…LNLLPMLDAL (168 aa).

It belongs to the dullard family.

Its subcellular location is the endoplasmic reticulum membrane. The protein localises to the nucleus membrane. It catalyses the reaction O-phospho-L-seryl-[protein] + H2O = L-seryl-[protein] + phosphate. The catalysed reaction is O-phospho-L-threonyl-[protein] + H2O = L-threonyl-[protein] + phosphate. Serine/threonine protein phosphatase that may dephosphorylate and activate lipins. Lipins are phosphatidate phosphatases that catalyze the conversion of phosphatidic acid to diacylglycerol and control the metabolism of fatty acids at different levels. May indirectly modulate the lipid composition of nuclear and/or endoplasmic reticulum membranes and be required for proper nuclear membrane morphology and/or dynamics. May also indirectly regulate the production of lipid droplets and triacylglycerol. May antagonize BMP signaling. This Danio rerio (Zebrafish) protein is CTD nuclear envelope phosphatase 1B (ctdnep1b).